The sequence spans 341 residues: UDP-N-acetylenolpyruvoylglucosamine reductase (341 aa).

One can recognise an FAD-binding PCMH-type domain in the interval 15–185 (VTQSCLSLIE…TAVGLRLPKT (171 aa)). R161 is an active-site residue. Residue S231 is the Proton donor of the active site. E327 is a catalytic residue.

This sequence belongs to the MurB family. FAD serves as cofactor.

The protein resides in the cytoplasm. The enzyme catalyses UDP-N-acetyl-alpha-D-muramate + NADP(+) = UDP-N-acetyl-3-O-(1-carboxyvinyl)-alpha-D-glucosamine + NADPH + H(+). It functions in the pathway cell wall biogenesis; peptidoglycan biosynthesis. Its function is as follows. Cell wall formation. This chain is UDP-N-acetylenolpyruvoylglucosamine reductase, found in Shewanella oneidensis (strain ATCC 700550 / JCM 31522 / CIP 106686 / LMG 19005 / NCIMB 14063 / MR-1).